A 71-amino-acid polypeptide reads, in one-letter code: uncharacterized protein (71 aa).

The tract at residues 1–71 (MLFETLKSLS…AFFSRPFYSE (71 aa)) is disordered. The segment covering 7 to 33 (KSLSQQNGGQFSDEQSFESPISSSFNG) has biased composition (polar residues). Residues 35–65 (SMPFGSPSSTMSSSYKGNTNSSTKSSSAFFS) show a composition bias toward low complexity.

This is an uncharacterized protein from Dictyostelium discoideum (Social amoeba).